We begin with the raw amino-acid sequence, 377 residues long: tRNA-specific 2-thiouridylase MnmA (377 aa).

ATP is bound by residues 18-25 (AMSGGVDS) and methionine 44. The active-site Nucleophile is the cysteine 113. A disulfide bridge connects residues cysteine 113 and cysteine 210. Residue glycine 137 participates in ATP binding. The tract at residues 159-161 (RDQ) is interaction with tRNA. Cysteine 210 acts as the Cysteine persulfide intermediate in catalysis.

Belongs to the MnmA/TRMU family.

Its subcellular location is the cytoplasm. It carries out the reaction S-sulfanyl-L-cysteinyl-[protein] + uridine(34) in tRNA + AH2 + ATP = 2-thiouridine(34) in tRNA + L-cysteinyl-[protein] + A + AMP + diphosphate + H(+). Functionally, catalyzes the 2-thiolation of uridine at the wobble position (U34) of tRNA, leading to the formation of s(2)U34. In Rhodospirillum rubrum (strain ATCC 11170 / ATH 1.1.1 / DSM 467 / LMG 4362 / NCIMB 8255 / S1), this protein is tRNA-specific 2-thiouridylase MnmA.